The primary structure comprises 829 residues: E3 ubiquitin-protein ligase Jade-2 (829 aa).

Residues 1–52 (MEEKRRKYSISSDNSDTTDGHVTSTSASRCSKLPSSTKSGWPRQNEKKPSEV) are disordered. Residues S9 and S15 each carry the phosphoserine modification. The span at 9 to 39 (SISSDNSDTTDGHVTSTSASRCSKLPSSTKS) shows a compositional bias: polar residues. K32 and K38 each carry N6-acetyllysine. Residue S117 is modified to Phosphoserine. A PHD-type 1 zinc finger spans residues 199-249 (DVVCDVCRSPEGEDGNEMVFCDKCNVCVHQACYGILKVPTGSWLCRTCALG). The C2HC pre-PHD-type zinc-finger motif lies at 251–285 (QPKCLLCPKRGGALKPTRSGTKWVHVSCALWIPEV). The residue at position 298 (K298) is an N6-acetyllysine. The segment at 309–365 (LSCSLCKECTGTCIQCSMPSCITAFHVTCAFDRGLEMRTILADNDEVKFKSLCQEHS) adopts a PHD-type 2 zinc-finger fold. Disordered regions lie at residues 362–383 (QEHSDGGPRSEPTSEPVEPSQA), 517–555 (REPSGRRSKGKKNDSKRKGREGPKGSSPEKKEKVKAGPE), and 622–817 (SFMR…REAG). Basic residues predominate over residues 522–535 (RRSKGKKNDSKRKG). The segment covering 536–552 (REGPKGSSPEKKEKVKA) has biased composition (basic and acidic residues). Over residues 637 to 650 (KARGRTRLPAKKKP) the composition is skewed to basic residues. The span at 776–786 (ERPKVSLHFDT) shows a compositional bias: basic and acidic residues. Positions 792-806 (FSDEEMSDSEVEAED) are enriched in acidic residues.

It belongs to the JADE family. Component of the HBO1 complex composed at least of ING4 or ING5, MYST2/HBO1, MEAF6, and one of JADE1, JADE2 and JADE3. Interacts (via C-terminus) with KDM1A (via AOD/Tower domain).

It carries out the reaction S-ubiquitinyl-[E2 ubiquitin-conjugating enzyme]-L-cysteine + [acceptor protein]-L-lysine = [E2 ubiquitin-conjugating enzyme]-L-cysteine + N(6)-ubiquitinyl-[acceptor protein]-L-lysine.. It functions in the pathway protein modification; protein ubiquitination. In terms of biological role, scaffold subunit of some HBO1 complexes, which have a histone H4 acetyltransferase activity. Acts as a E3 ubiquitin-protein ligase mediating the ubiquitination and subsequent proteasomal degradation of target protein histone demethylase KDM1A. Also acts as a ubiquitin ligase E3 toward itself. Positive regulator of neurogenesis. The chain is E3 ubiquitin-protein ligase Jade-2 (Jade2) from Mus musculus (Mouse).